The chain runs to 523 residues: Sucrose 6(F)-phosphate phosphorylase (523 aa).

Sucrose 6(F)-phosphate contacts are provided by residues Asp58, His96, 221–223 (RLD), Glu264, 326–327 (HD), and Lys434. Asp223 functions as the Nucleophile in the catalytic mechanism. The active-site Proton donor/acceptor is Glu264.

It belongs to the glycosyl hydrolase 13 family. Sucrose phosphorylase subfamily. As to quaternary structure, monomer.

The catalysed reaction is sucrose 6(F)-phosphate + phosphate = beta-D-fructose 6-phosphate + alpha-D-glucose 1-phosphate. Functionally, catalyzes the reversible phosphorolysis of sucrose 6(F)-phosphate into alpha-D-glucose 1-phosphate (Glc1P) and D-fructose 6-phosphate. May be involved in a new pathway for the degradation of sucrose, which could become phosphorylated on its fructose moiety during uptake via a PTS system. Shows strict specificity since it does not catalyze reactions with alternative substrates. The sequence is that of Sucrose 6(F)-phosphate phosphorylase from Ilumatobacter coccineus (strain NBRC 103263 / KCTC 29153 / YM16-304).